The sequence spans 333 residues: Taste receptor type 2 member 38 (333 aa).

At 1-17 (MLTLTRIHTVSYEVRST) the chain is on the extracellular side. The helical transmembrane segment at 18–38 (FLFISVLEFAVGFLTNAFVFL) threads the bilayer. The Cytoplasmic segment spans residues 39–55 (VNFWDVVKRQPLSNSDC). A helical membrane pass occupies residues 56–76 (VLLCLSISRLFLHGLLFLSAI). The Extracellular segment spans residues 77-94 (QLTHFQKLSEPLNHSYQA). Residues 95–115 (IIMLWMIANQANLWLAACLSL) form a helical membrane-spanning segment. Topologically, residues 116 to 142 (LYCSKLIRFSHTFLICLASWVSRKISQ) are cytoplasmic. The chain crosses the membrane as a helical span at residues 143–163 (MLLGIILCSCICTVLCVWCFF). Residues 164–190 (SRPHFTVTTVLFMNNNTRLNWQIKDLN) lie on the Extracellular side of the membrane. The N-linked (GlcNAc...) asparagine glycan is linked to asparagine 178. The chain crosses the membrane as a helical span at residues 191 to 211 (LFYSFLFCYLWSVPPFLLFLV). Residues 212-251 (SSGMLTVSLGRHMRTMKVYTRDSRDPSLEAHIKALKSLVS) are Cytoplasmic-facing. A helical transmembrane segment spans residues 252 to 272 (FFCFFVISSCAAFISVPLLIL). The Extracellular segment spans residues 273 to 276 (WRDK). Residues 277–297 (IGVMVCVGIMAACPSGHAAVL) traverse the membrane as a helical segment. The Cytoplasmic segment spans residues 298–333 (ISGNAKLRRAVTTILLWAQSSLKVRADHKADSRTLC).

The protein belongs to the G-protein coupled receptor T2R family.

It localises to the membrane. Its function is as follows. Receptor that may play a role in the perception of bitterness and is gustducin-linked. May play a role in sensing the chemical composition of the gastrointestinal content. The activity of this receptor may stimulate alpha gustducin, mediate PLC-beta-2 activation and lead to the gating of TRPM5. This is Taste receptor type 2 member 38 (TAS2R38) from Pan troglodytes (Chimpanzee).